A 207-amino-acid polypeptide reads, in one-letter code: Small ribosomal subunit protein uS4 (207 aa).

A disordered region spans residues 31–52 (KAKFDSKPGQHGRTSGARTSDY). Residues 97–157 (CRLDNVVYRM…DKSKKQARIV (61 aa)) enclose the S4 RNA-binding domain.

The protein belongs to the universal ribosomal protein uS4 family. In terms of assembly, part of the 30S ribosomal subunit. Contacts protein S5. The interaction surface between S4 and S5 is involved in control of translational fidelity.

In terms of biological role, one of the primary rRNA binding proteins, it binds directly to 16S rRNA where it nucleates assembly of the body of the 30S subunit. Its function is as follows. With S5 and S12 plays an important role in translational accuracy. This Acidovorax sp. (strain JS42) protein is Small ribosomal subunit protein uS4.